Consider the following 313-residue polypeptide: 4-hydroxy-3-methylbut-2-enyl diphosphate reductase (313 aa).

Cys-12 contacts [4Fe-4S] cluster. (2E)-4-hydroxy-3-methylbut-2-enyl diphosphate contacts are provided by His-41 and His-74. Positions 41 and 74 each coordinate dimethylallyl diphosphate. The isopentenyl diphosphate site is built by His-41 and His-74. A [4Fe-4S] cluster-binding site is contributed by Cys-96. His-124 contributes to the (2E)-4-hydroxy-3-methylbut-2-enyl diphosphate binding site. Position 124 (His-124) interacts with dimethylallyl diphosphate. His-124 provides a ligand contact to isopentenyl diphosphate. Glu-126 (proton donor) is an active-site residue. A (2E)-4-hydroxy-3-methylbut-2-enyl diphosphate-binding site is contributed by Thr-167. Cys-197 serves as a coordination point for [4Fe-4S] cluster. The (2E)-4-hydroxy-3-methylbut-2-enyl diphosphate site is built by Ser-225, Ser-226, Asn-227, and Ser-269. 4 residues coordinate dimethylallyl diphosphate: Ser-225, Ser-226, Asn-227, and Ser-269. 4 residues coordinate isopentenyl diphosphate: Ser-225, Ser-226, Asn-227, and Ser-269.

It belongs to the IspH family. The cofactor is [4Fe-4S] cluster.

The enzyme catalyses isopentenyl diphosphate + 2 oxidized [2Fe-2S]-[ferredoxin] + H2O = (2E)-4-hydroxy-3-methylbut-2-enyl diphosphate + 2 reduced [2Fe-2S]-[ferredoxin] + 2 H(+). It catalyses the reaction dimethylallyl diphosphate + 2 oxidized [2Fe-2S]-[ferredoxin] + H2O = (2E)-4-hydroxy-3-methylbut-2-enyl diphosphate + 2 reduced [2Fe-2S]-[ferredoxin] + 2 H(+). It functions in the pathway isoprenoid biosynthesis; dimethylallyl diphosphate biosynthesis; dimethylallyl diphosphate from (2E)-4-hydroxy-3-methylbutenyl diphosphate: step 1/1. The protein operates within isoprenoid biosynthesis; isopentenyl diphosphate biosynthesis via DXP pathway; isopentenyl diphosphate from 1-deoxy-D-xylulose 5-phosphate: step 6/6. Catalyzes the conversion of 1-hydroxy-2-methyl-2-(E)-butenyl 4-diphosphate (HMBPP) into a mixture of isopentenyl diphosphate (IPP) and dimethylallyl diphosphate (DMAPP). Acts in the terminal step of the DOXP/MEP pathway for isoprenoid precursor biosynthesis. The protein is 4-hydroxy-3-methylbut-2-enyl diphosphate reductase of Photobacterium profundum (strain SS9).